The following is a 301-amino-acid chain: Probable alpha-L-glutamate ligase (301 aa).

The ATP-grasp domain occupies 104–287 (LQLLSRRGIG…VAGIIIEHIE (184 aa)). Residues K141, 178-179 (EY), D187, and 211-213 (RSN) contribute to the ATP site. The Mg(2+) site is built by D248, E260, and N262. D248, E260, and N262 together coordinate Mn(2+).

This sequence belongs to the RimK family. It depends on Mg(2+) as a cofactor. Requires Mn(2+) as cofactor.

The protein is Probable alpha-L-glutamate ligase of Pseudomonas fluorescens (strain ATCC BAA-477 / NRRL B-23932 / Pf-5).